The primary structure comprises 390 residues: Aspartate carbamoyltransferase, chloroplastic (390 aa).

Residues 1–68 constitute a chloroplast transit peptide; sequence MSIASSLTSA…NLTRNVGPVR (68 aa). Residues arginine 136 and threonine 137 each contribute to the carbamoyl phosphate site. UMP contacts are provided by arginine 136 and threonine 137. Lysine 166 contributes to the L-aspartate binding site. Residues arginine 187, histidine 215, and glutamine 218 each coordinate carbamoyl phosphate. UMP is bound by residues arginine 187 and histidine 215. Positions 248 and 310 each coordinate UMP. Arginine 248 and arginine 310 together coordinate L-aspartate. 2 residues coordinate carbamoyl phosphate: leucine 350 and proline 351.

Belongs to the aspartate/ornithine carbamoyltransferase superfamily. ATCase family. Homotrimer.

The protein localises to the plastid. Its subcellular location is the chloroplast. The catalysed reaction is carbamoyl phosphate + L-aspartate = N-carbamoyl-L-aspartate + phosphate + H(+). It functions in the pathway pyrimidine metabolism; UMP biosynthesis via de novo pathway; (S)-dihydroorotate from bicarbonate: step 2/3. With respect to regulation, feedback inhibited by UMP. Functionally, catalyzes the condensation of carbamoyl phosphate and aspartate to form carbamoyl aspartate and inorganic phosphate, the committed step in the de novo pyrimidine nucleotide biosynthesis pathway. The polypeptide is Aspartate carbamoyltransferase, chloroplastic (PYRB) (Arabidopsis thaliana (Mouse-ear cress)).